A 280-amino-acid polypeptide reads, in one-letter code: uncharacterized protein (280 aa).

The segment covering 1–10 (MSSSIKKLKK) has biased composition (basic residues). The disordered stretch occupies residues 1 to 45 (MSSSIKKLKKDTKDTDKTPSKKIYQETHNSEDSEDSEDSDNENNT). Residues 11–31 (DTKDTDKTPSKKIYQETHNSE) are compositionally biased toward basic and acidic residues. A compositionally biased stretch (acidic residues) spans 32–41 (DSEDSEDSDN).

This is an uncharacterized protein from Acanthamoeba polyphaga mimivirus (APMV).